The chain runs to 533 residues: Probable bifunctional tRNA threonylcarbamoyladenosine biosynthesis protein (533 aa).

The interval 1–329 (MTRVLGIEGT…FRPDEVPVSW (329 aa)) is kae1. Fe cation contacts are provided by histidine 113 and histidine 117. L-threonylcarbamoyladenylate-binding positions include 134–138 (NASGA), aspartate 166, glycine 179, glutamate 183, and asparagine 262. Fe cation is bound at residue aspartate 290. One can recognise a Protein kinase domain in the interval 338–533 (PVPTDERRQG…REIETRGRYQ (196 aa)). ATP contacts are provided by residues 345 to 352 (RQGAEAVV) and lysine 363. The active-site Proton acceptor; for kinase activity is aspartate 452.

The protein in the N-terminal section; belongs to the KAE1 / TsaD family. This sequence in the C-terminal section; belongs to the protein kinase superfamily. Tyr protein kinase family. BUD32 subfamily. As to quaternary structure, component of the KEOPS complex that consists of Kae1, Bud32, Cgi121 and Pcc1; the whole complex dimerizes. Requires Fe(2+) as cofactor.

It is found in the cytoplasm. The catalysed reaction is L-seryl-[protein] + ATP = O-phospho-L-seryl-[protein] + ADP + H(+). It carries out the reaction L-threonyl-[protein] + ATP = O-phospho-L-threonyl-[protein] + ADP + H(+). The enzyme catalyses L-threonylcarbamoyladenylate + adenosine(37) in tRNA = N(6)-L-threonylcarbamoyladenosine(37) in tRNA + AMP + H(+). In terms of biological role, required for the formation of a threonylcarbamoyl group on adenosine at position 37 (t(6)A37) in tRNAs that read codons beginning with adenine. Is a component of the KEOPS complex that is probably involved in the transfer of the threonylcarbamoyl moiety of threonylcarbamoyl-AMP (TC-AMP) to the N6 group of A37. The Kae1 domain likely plays a direct catalytic role in this reaction. The Bud32 domain probably displays kinase activity that regulates Kae1 function. The protein is Probable bifunctional tRNA threonylcarbamoyladenosine biosynthesis protein of Natronomonas pharaonis (strain ATCC 35678 / DSM 2160 / CIP 103997 / JCM 8858 / NBRC 14720 / NCIMB 2260 / Gabara) (Halobacterium pharaonis).